A 306-amino-acid chain; its full sequence is Pantothenate kinase (306 aa).

ATP is bound at residue 90-97 (GSVAVGKS).

Belongs to the prokaryotic pantothenate kinase family.

It localises to the cytoplasm. It catalyses the reaction (R)-pantothenate + ATP = (R)-4'-phosphopantothenate + ADP + H(+). It participates in cofactor biosynthesis; coenzyme A biosynthesis; CoA from (R)-pantothenate: step 1/5. The polypeptide is Pantothenate kinase (Listeria welshimeri serovar 6b (strain ATCC 35897 / DSM 20650 / CCUG 15529 / CIP 8149 / NCTC 11857 / SLCC 5334 / V8)).